The primary structure comprises 383 residues: MAAEKPSSIFRDFLDSEAAGGVILMVTAALALVIANSPLSGAYFAFLQAKFLGMSVLHGINDGLMAVFFLLVGLEIKREVLGGQLSNWSQRILPGLAALGGMVVPALVFLALNAKSPETVRGWAVPTATDIAFALGVLALLGPRVPASLKIFLTALAIIDDLGAVLVIALFYTAKLSWPALVAVAAILALLAALNRLRVRSLWPYLLVGAGLWGAMLQSGVHATVAGIALALTIPMGDEQHSPLHRLEHGLAPWVGYGIVPIFGFANAGVSFAGLEPSRVLQSLPLGIALGLLFGKQIGVFGTAWMAIWLGFAARPEGAGTAQLYGVAVLCGIGFTMSLFIGALAFGELPASSDAVKVGVLAGSALSAILGSLVLLRCRSSSS.

11 consecutive transmembrane segments (helical) span residues alanine 19–leucine 39, valine 56–isoleucine 76, isoleucine 92–leucine 112, glycine 122–glycine 142, isoleucine 151–phenylalanine 171, alanine 174–leucine 194, leucine 212–leucine 232, valine 255–leucine 275, leucine 292–phenylalanine 312, glycine 326–phenylalanine 346, and valine 356–leucine 376.

This sequence belongs to the NhaA Na(+)/H(+) (TC 2.A.33) antiporter family.

Its subcellular location is the cell inner membrane. The enzyme catalyses Na(+)(in) + 2 H(+)(out) = Na(+)(out) + 2 H(+)(in). Its function is as follows. Na(+)/H(+) antiporter that extrudes sodium in exchange for external protons. The protein is Na(+)/H(+) antiporter NhaA of Paramagnetospirillum magneticum (strain ATCC 700264 / AMB-1) (Magnetospirillum magneticum).